The chain runs to 453 residues: uncharacterized protein (453 aa).

The TRAM domain maps to 5–63 (LLKKNQSIELTIEDLTHDGSGVGKIDGYPFFIPNTLPGEKVTAKIIKLNKNYGFARMEN). [4Fe-4S] cluster is bound by residues Cys76, Cys82, Cys85, and Cys162. S-adenosyl-L-methionine-binding residues include Gln285, Tyr314, Glu335, and Asp383. Catalysis depends on Cys410, which acts as the Nucleophile.

Belongs to the class I-like SAM-binding methyltransferase superfamily. RNA M5U methyltransferase family.

This is an uncharacterized protein from Listeria monocytogenes serovar 1/2a (strain ATCC BAA-679 / EGD-e).